The primary structure comprises 605 residues: Aspartate--tRNA(Asp/Asn) ligase (605 aa).

Position 183 (E183) interacts with L-aspartate. Positions 207–210 (QLYK) are aspartate. L-aspartate is bound at residue R229. Residues 229–231 (RDE) and Q238 contribute to the ATP site. Position 456 (H456) interacts with L-aspartate. E490 contacts ATP. R497 contributes to the L-aspartate binding site. Residue 542 to 545 (GLDR) coordinates ATP.

It belongs to the class-II aminoacyl-tRNA synthetase family. Type 1 subfamily. Homodimer.

It localises to the cytoplasm. The enzyme catalyses tRNA(Asx) + L-aspartate + ATP = L-aspartyl-tRNA(Asx) + AMP + diphosphate. In terms of biological role, aspartyl-tRNA synthetase with relaxed tRNA specificity since it is able to aspartylate not only its cognate tRNA(Asp) but also tRNA(Asn). Reaction proceeds in two steps: L-aspartate is first activated by ATP to form Asp-AMP and then transferred to the acceptor end of tRNA(Asp/Asn). This Heliobacterium modesticaldum (strain ATCC 51547 / Ice1) protein is Aspartate--tRNA(Asp/Asn) ligase.